The chain runs to 250 residues: Low affinity immunoglobulin gamma Fc region receptor III-A (250 aa).

The signal sequence occupies residues 1 to 20 (MWRLLSPTALLLLVSAGTRA). The Extracellular portion of the chain corresponds to 21 to 207 (ADLSKAMVVL…TSTFLPHWYQ (187 aa)). 2 Ig-like C2-type domains span residues 32–105 (PEWN…LEVH) and 120–189 (EGDT…VNIT). 2 disulfide bridges follow: cysteine 47–cysteine 89 and cysteine 128–cysteine 172. Asparagine 63, asparagine 133, asparagine 180, and asparagine 187 each carry an N-linked (GlcNAc...) asparagine glycan. Residues 208 to 228 (IAFFLVTALLFVVDTGLHVAV) form a helical membrane-spanning segment. The Cytoplasmic portion of the chain corresponds to 229–250 (QRDLQSSVKEWKDGKVTWSHGP).

In terms of assembly, forms a heterooligomeric complex with ITAM-containing signaling subunits FCER1G. Interacts (via transmembrane domain) with signaling subunits; this interaction is a prerequisite for receptor complex expression on the cell surface and intracellular signal transduction. Binds the Fc region of antigen-complexed IgG.

It is found in the cell membrane. In terms of biological role, receptor for the invariable Fc fragment of immunoglobulin gamma (IgG). Optimally activated upon binding of clustered antigen-IgG complexes displayed on cell surfaces, triggers lysis of antibody-coated cells, a process known as antibody-dependent cellular cytotoxicity (ADCC). Does not bind free monomeric IgG, thus avoiding inappropriate effector cell activation in the absence of antigenic trigger. Mediates IgG effector functions on natural killer (NK) cells. Binds antigen-IgG complexes generated upon infection and triggers NK cell-dependent cytokine production and degranulation to limit viral load and propagation. Fc-binding subunit that associates with FCER1G adapter to form functional signaling complexes. Following the engagement of antigen-IgG complexes, triggers phosphorylation of immunoreceptor tyrosine-based activation motif (ITAM)-containing adapter with subsequent activation of phosphatidylinositol 3-kinase signaling and sustained elevation of intracellular calcium that ultimately drive NK cell activation. Mediates enhanced ADCC in response to afucosylated IgGs. The polypeptide is Low affinity immunoglobulin gamma Fc region receptor III-A (Felis catus (Cat)).